The primary structure comprises 647 residues: C2H2 finger domain transcription factor USV101 (647 aa).

Over residues 1–10 (MSFVAPDDRA) the composition is skewed to basic and acidic residues. The disordered stretch occupies residues 1-132 (MSFVAPDDRA…ATGYTPDGQP (132 aa)). Polar residues-rich tracts occupy residues 27 to 54 (ESTS…SPNQ) and 66 to 84 (SSHS…STAY). Residues 97-122 (PTQQQQQQQSEQHIPSPPSSSNRPPS) show a composition bias toward low complexity. 2 consecutive C2H2-type zinc fingers follow at residues 144 to 169 (FRCR…VRKH) and 175 to 197 (FPCH…ATVH). Positions 220 to 647 (QRASREQRRR…VKQQDDKKTQ (428 aa)) are disordered. Residues 222–248 (ASREQRRRGEVVEVPKGAVERRRETRK) are compositionally biased toward basic and acidic residues. Residues 249–259 (AQAAAAQAAAA) show a composition bias toward low complexity. Polar residues predominate over residues 261 to 278 (GHSQQNSPYAQYHESQWN). 3 stretches are compositionally biased toward low complexity: residues 312 to 327 (SSSA…YDSA), 404 to 414 (HGAYPPHDAAA), and 421 to 434 (GYYH…GSYP). The span at 504-515 (RAEDDFGKDDRK) shows a compositional bias: basic and acidic residues. The span at 521-540 (SPSNSQVPDSSTAAHANGAH) shows a compositional bias: low complexity. Over residues 628–647 (VDKEREKKEEVKQQDDKKTQ) the composition is skewed to basic and acidic residues.

Its subcellular location is the nucleus. It is found in the cytoplasm. Functionally, transcription factor that promotes pheromone gene expression, which results in a subsequent increase in cell fusion. Also promotes production of melanin and capsule and thereby is required for full virulence. The chain is C2H2 finger domain transcription factor USV101 from Cryptococcus neoformans var. grubii serotype A (strain H99 / ATCC 208821 / CBS 10515 / FGSC 9487) (Filobasidiella neoformans var. grubii).